Consider the following 109-residue polypeptide: Protein ELF4-LIKE 3 (109 aa).

Positions 88-109 are disordered; the sequence is SMEASSEGDSSEGRGNRRIRPA.

The protein belongs to the EARLY FLOWERING 4 family. Homodimer.

It localises to the nucleus. In terms of biological role, component of the central CCA1/LHY-TOC1 feedback loop in the circadian clock that promotes clock accuracy and is required for sustained rhythms in the absence of daily light/dark cycles. The sequence is that of Protein ELF4-LIKE 3 (EFL3) from Arabidopsis thaliana (Mouse-ear cress).